Reading from the N-terminus, the 255-residue chain is uncharacterized protein (255 aa).

The HTH deoR-type domain occupies 3-58 (PVERRQIILEMVAEKGIVSIAELTDRMNVSHMTIRRDLQKLEQQGAVVLVSGGVQS). Positions 20–39 (VSIAELTDRMNVSHMTIRRD) form a DNA-binding region, H-T-H motif.

This is an uncharacterized protein from Escherichia coli (strain K12).